A 170-amino-acid chain; its full sequence is Probable chemoreceptor glutamine deamidase CheD 3 (170 aa).

It belongs to the CheD family.

The catalysed reaction is L-glutaminyl-[protein] + H2O = L-glutamyl-[protein] + NH4(+). In terms of biological role, probably deamidates glutamine residues to glutamate on methyl-accepting chemotaxis receptors (MCPs), playing an important role in chemotaxis. This Dechloromonas aromatica (strain RCB) protein is Probable chemoreceptor glutamine deamidase CheD 3.